Consider the following 187-residue polypeptide: Threonylcarbamoyl-AMP synthase (187 aa).

Positions 4–187 (TLDLDRAVAA…DARSGQILRD (184 aa)) constitute a YrdC-like domain.

The protein belongs to the SUA5 family. TsaC subfamily.

It localises to the cytoplasm. The enzyme catalyses L-threonine + hydrogencarbonate + ATP = L-threonylcarbamoyladenylate + diphosphate + H2O. Functionally, required for the formation of a threonylcarbamoyl group on adenosine at position 37 (t(6)A37) in tRNAs that read codons beginning with adenine. Catalyzes the conversion of L-threonine, HCO(3)(-)/CO(2) and ATP to give threonylcarbamoyl-AMP (TC-AMP) as the acyladenylate intermediate, with the release of diphosphate. This is Threonylcarbamoyl-AMP synthase from Xanthomonas axonopodis pv. citri (strain 306).